The chain runs to 140 residues: Arsenate reductase (140 aa).

Cys-11 functions as the Nucleophile; cysteine thioarsenate intermediate in the catalytic mechanism.

This sequence belongs to the ArsC family.

The catalysed reaction is [glutaredoxin]-dithiol + arsenate + glutathione + H(+) = glutathionyl-S-S-[glutaredoxin] + arsenite + H2O. Involved in resistance to arsenate. Catalyzes the reduction of arsenate [As(V)] to arsenite [As(III)]. The resulting arsenite is then extruded from the cell via the aquaglyceroporin AqpS. Does not display antimonate reductase activity. The polypeptide is Arsenate reductase (Rhizobium meliloti (strain 1021) (Ensifer meliloti)).